A 493-amino-acid chain; its full sequence is Galactose-1-phosphate uridylyltransferase 2 (493 aa).

It belongs to the galactose-1-phosphate uridylyltransferase type 2 family.

The protein resides in the cytoplasm. The enzyme catalyses alpha-D-galactose 1-phosphate + UDP-alpha-D-glucose = alpha-D-glucose 1-phosphate + UDP-alpha-D-galactose. Its pathway is carbohydrate metabolism; galactose metabolism. This is Galactose-1-phosphate uridylyltransferase 2 (galT2) from Streptococcus pneumoniae (strain ATCC BAA-255 / R6).